Reading from the N-terminus, the 191-residue chain is Pentapeptide repeat protein MfpA (191 aa).

The 40-residue stretch at 115-154 (CRLREVSLVGADLRKAVLRRADLTGSRVQDARLEEADLRG) folds into the Pentapeptide repeat domain.

The protein belongs to the pentapeptide repeat protein family. Homodimer. Probably interacts with DNA gyrase.

Its function is as follows. When present on multicopy plasmids confers increased resistance to fluoroquinolone antibiotics such as ciprofloxacin and sparfloxacin but not the quinolone nalidixic acid. Forms a structure that exhibits size, shape and electrostatic similarity to B-form DNA; it may bind to DNA gyrase which is postulated to protect it from fluoroquinolones. In Mycolicibacterium smegmatis (strain ATCC 700084 / mc(2)155) (Mycobacterium smegmatis), this protein is Pentapeptide repeat protein MfpA.